The chain runs to 161 residues: Anthranilate 1,2-dioxygenase small subunit (161 aa).

Belongs to the bacterial ring-hydroxylating dioxygenase beta subunit family. In terms of assembly, part of a multicomponent enzyme system composed of a reductase (AndAa), a ferredoxin (AndAb) and a two-subunit oxygenase component (AndAc and AndAd).

It carries out the reaction anthranilate + NADH + O2 + 3 H(+) = catechol + NH4(+) + CO2 + NAD(+). The catalysed reaction is anthranilate + NADPH + O2 + 3 H(+) = catechol + NH4(+) + CO2 + NADP(+). It participates in aromatic compound metabolism; anthranilate degradation via hydroxylation; catechol from anthranilate: step 1/1. Functionally, oxygenase component of anthranilate dioxygenase multicomponent enzyme system which catalyzes the incorporation of both atoms of molecular oxygen into anthranilate to form catechol. Can also act on benzoate and salicylate but not on 2-chlorobenzoate or o-toluate. This chain is Anthranilate 1,2-dioxygenase small subunit, found in Burkholderia cepacia (Pseudomonas cepacia).